Reading from the N-terminus, the 358-residue chain is UDP-N-acetylglucosamine--N-acetylmuramyl-(pentapeptide) pyrophosphoryl-undecaprenol N-acetylglucosamine transferase (358 aa).

UDP-N-acetyl-alpha-D-glucosamine is bound by residues 11-13 (TGG), asparagine 120, arginine 161, serine 188, and glutamine 282.

Belongs to the glycosyltransferase 28 family. MurG subfamily.

It is found in the cell inner membrane. The enzyme catalyses di-trans,octa-cis-undecaprenyl diphospho-N-acetyl-alpha-D-muramoyl-L-alanyl-D-glutamyl-meso-2,6-diaminopimeloyl-D-alanyl-D-alanine + UDP-N-acetyl-alpha-D-glucosamine = di-trans,octa-cis-undecaprenyl diphospho-[N-acetyl-alpha-D-glucosaminyl-(1-&gt;4)]-N-acetyl-alpha-D-muramoyl-L-alanyl-D-glutamyl-meso-2,6-diaminopimeloyl-D-alanyl-D-alanine + UDP + H(+). The protein operates within cell wall biogenesis; peptidoglycan biosynthesis. Functionally, cell wall formation. Catalyzes the transfer of a GlcNAc subunit on undecaprenyl-pyrophosphoryl-MurNAc-pentapeptide (lipid intermediate I) to form undecaprenyl-pyrophosphoryl-MurNAc-(pentapeptide)GlcNAc (lipid intermediate II). This Parasynechococcus marenigrum (strain WH8102) protein is UDP-N-acetylglucosamine--N-acetylmuramyl-(pentapeptide) pyrophosphoryl-undecaprenol N-acetylglucosamine transferase.